We begin with the raw amino-acid sequence, 298 residues long: tRNA (guanine(9)-N1)-methyltransferase (298 aa).

Polar residues predominate over residues 1 to 10; it reads MSDTSENSNA. Residues 1–44 form a disordered region; the sequence is MSDTSENSNAEIPADTSDVKDKPKPIVRAPQFPPPPEGISKSQW. In terms of domain architecture, SAM-dependent MTase TRM10-type spans 96-285; that stretch reads PPKVNLNQSD…SVLPPRKLEV (190 aa). S-adenosyl-L-methionine is bound by residues 192–193, Gly-212, 216–220, Cys-224, Leu-238, and 250–252; these read LT, DKNRH, and KVL. The Proton acceptor role is filled by Asp-216.

This sequence belongs to the class IV-like SAM-binding methyltransferase superfamily. TRM10 family. Monomer.

It is found in the cytoplasm. Its subcellular location is the nucleus. It carries out the reaction guanosine(9) in tRNA + S-adenosyl-L-methionine = N(1)-methylguanosine(9) in tRNA + S-adenosyl-L-homocysteine + H(+). S-adenosyl-L-methionine-dependent guanine N(1)-methyltransferase that catalyzes the formation of N(1)-methylguanine at position 9 (m1G9) in cytoplasmic tRNA. The polypeptide is tRNA (guanine(9)-N1)-methyltransferase (Kluyveromyces lactis (strain ATCC 8585 / CBS 2359 / DSM 70799 / NBRC 1267 / NRRL Y-1140 / WM37) (Yeast)).